A 724-amino-acid polypeptide reads, in one-letter code: Protein BCH1 (724 aa).

Residues 51 to 65 (TTATASANDNGATSN) show a composition bias toward low complexity. The tract at residues 51–71 (TTATASANDNGATSNINGQDP) is disordered. Residues 711 to 724 (LNFLKNFTNDTFDN) form a CHS5-binding region.

Belongs to the CHAPS family. Component of the CHS5/6 complex composed of the 4 CHAPS proteins BCH1, BCH2, BUD7, and CHS6 as well as at least CHS5 and GTP-bound ARF1. The complex interacts with the cargo protein CHS3.

It is found in the golgi apparatus. It localises to the trans-Golgi network membrane. In terms of biological role, member of the CHS5-ARF1P-binding proteins (CHAPS) which mediates export of specific cargo proteins, including chitin synthase CHS3. The sequence is that of Protein BCH1 (BCH1) from Saccharomyces cerevisiae (strain ATCC 204508 / S288c) (Baker's yeast).